We begin with the raw amino-acid sequence, 428 residues long: 3-phosphoshikimate 1-carboxyvinyltransferase (428 aa).

Residues lysine 22, serine 23, and arginine 27 each coordinate 3-phosphoshikimate. Lysine 22 is a binding site for phosphoenolpyruvate. Residues glycine 94 and arginine 122 each coordinate phosphoenolpyruvate. Residues serine 168, serine 169, glutamine 170, serine 196, aspartate 315, and lysine 342 each contribute to the 3-phosphoshikimate site. Phosphoenolpyruvate is bound at residue glutamine 170. Aspartate 315 serves as the catalytic Proton acceptor. Phosphoenolpyruvate-binding residues include arginine 346, arginine 389, and lysine 414.

This sequence belongs to the EPSP synthase family. As to quaternary structure, monomer.

It localises to the cytoplasm. The catalysed reaction is 3-phosphoshikimate + phosphoenolpyruvate = 5-O-(1-carboxyvinyl)-3-phosphoshikimate + phosphate. The protein operates within metabolic intermediate biosynthesis; chorismate biosynthesis; chorismate from D-erythrose 4-phosphate and phosphoenolpyruvate: step 6/7. Functionally, catalyzes the transfer of the enolpyruvyl moiety of phosphoenolpyruvate (PEP) to the 5-hydroxyl of shikimate-3-phosphate (S3P) to produce enolpyruvyl shikimate-3-phosphate and inorganic phosphate. The sequence is that of 3-phosphoshikimate 1-carboxyvinyltransferase from Thiobacillus denitrificans (strain ATCC 25259 / T1).